The sequence spans 401 residues: Heparan-sulfate 6-O-sulfotransferase 1 (401 aa).

At 1-4 the chain is on the cytoplasmic side; sequence MVER. The chain crosses the membrane as a helical; Signal-anchor for type II membrane protein span at residues 5–27; sequence ASKFVLVVAGSACFMLILYQYAG. The Lumenal portion of the chain corresponds to 28-401; the sequence is PGLSLGAPGG…DYMSHIIEKW (374 aa). A 3'-phosphoadenylyl sulfate-binding site is contributed by 83–91; that stretch reads HIQKTGGTT. Residues 113–114, Arg-130, Trp-135, and His-140 contribute to the substrate site; that span reads KK. The Proton acceptor role is filled by His-140. The 3'-phosphoadenylyl sulfate site is built by Arg-175 and Ser-183. Residues His-187 and Trp-194 each coordinate substrate. N-linked (GlcNAc...) asparagine glycosylation occurs at Asn-254. 307 to 309 is a 3'-phosphoadenylyl sulfate binding site; it reads MQY. N-linked (GlcNAc...) asparagine glycosylation is present at Asn-310. 313–314 contributes to the 3'-phosphoadenylyl sulfate binding site; it reads RA. The disordered stretch occupies residues 367–389; the sequence is ERLLHRSKEALPREDTEEPGRVP.

This sequence belongs to the sulfotransferase 6 family. Post-translationally, N-glycosylated.

Its subcellular location is the membrane. The enzyme catalyses alpha-D-glucosaminyl-[heparan sulfate](n) + 3'-phosphoadenylyl sulfate = 6-sulfo-alpha-D-glucosaminyl-[heparan sulfate](n) + adenosine 3',5'-bisphosphate + H(+). With respect to regulation, inhibited by dithiothreitol and stimulated by protamine. Functionally, 6-O-sulfation enzyme which catalyzes the transfer of sulfate from 3'-phosphoadenosine 5'-phosphosulfate (PAPS) to position 6 of the N-sulfoglucosamine residue (GlcNS) of heparan sulfate. Also transfers sulfate to CDSNS-heparin and performs the crucial step modification in the biosynthesis of anticoagulant heparan sulfate (HSact). Critical for normal neuronal development where it may play a role in neuron branching. May also play a role in limb development. May prefer iduronic acid. This Cricetulus griseus (Chinese hamster) protein is Heparan-sulfate 6-O-sulfotransferase 1.